Reading from the N-terminus, the 34-residue chain is Photosystem II reaction center protein M (34 aa).

The helical transmembrane segment at 5 to 25 threads the bilayer; the sequence is ILALIAVALFISIPTAFLVII.

The protein belongs to the PsbM family. PSII is composed of 1 copy each of membrane proteins PsbA, PsbB, PsbC, PsbD, PsbE, PsbF, PsbH, PsbI, PsbJ, PsbK, PsbL, PsbM, PsbT, PsbX, PsbY, PsbZ, Psb30/Ycf12, at least 3 peripheral proteins of the oxygen-evolving complex and a large number of cofactors. It forms dimeric complexes.

The protein localises to the plastid. The protein resides in the chloroplast thylakoid membrane. Functionally, one of the components of the core complex of photosystem II (PSII). PSII is a light-driven water:plastoquinone oxidoreductase that uses light energy to abstract electrons from H(2)O, generating O(2) and a proton gradient subsequently used for ATP formation. It consists of a core antenna complex that captures photons, and an electron transfer chain that converts photonic excitation into a charge separation. This subunit is found at the monomer-monomer interface. The polypeptide is Photosystem II reaction center protein M (Welwitschia mirabilis (Tree tumbo)).